The primary structure comprises 425 residues: Serine--tRNA ligase (425 aa).

Position 230-232 (230-232) interacts with L-serine; it reads TAE. 261–263 contributes to the ATP binding site; the sequence is RSE. E284 serves as a coordination point for L-serine. ATP is bound at residue 348 to 351; it reads EISS. S384 serves as a coordination point for L-serine.

It belongs to the class-II aminoacyl-tRNA synthetase family. Type-1 seryl-tRNA synthetase subfamily. Homodimer. The tRNA molecule binds across the dimer.

The protein resides in the cytoplasm. The catalysed reaction is tRNA(Ser) + L-serine + ATP = L-seryl-tRNA(Ser) + AMP + diphosphate + H(+). It carries out the reaction tRNA(Sec) + L-serine + ATP = L-seryl-tRNA(Sec) + AMP + diphosphate + H(+). Its pathway is aminoacyl-tRNA biosynthesis; selenocysteinyl-tRNA(Sec) biosynthesis; L-seryl-tRNA(Sec) from L-serine and tRNA(Sec): step 1/1. Its function is as follows. Catalyzes the attachment of serine to tRNA(Ser). Is also able to aminoacylate tRNA(Sec) with serine, to form the misacylated tRNA L-seryl-tRNA(Sec), which will be further converted into selenocysteinyl-tRNA(Sec). The protein is Serine--tRNA ligase of Streptococcus pyogenes serotype M49 (strain NZ131).